The sequence spans 47 residues: Large ribosomal subunit protein bL34 (47 aa).

It belongs to the bacterial ribosomal protein bL34 family.

This chain is Large ribosomal subunit protein bL34, found in Nocardia farcinica (strain IFM 10152).